Here is a 148-residue protein sequence, read N- to C-terminus: Probable DNA-directed RNA polymerases I, II, and III subunit RPABC3 (148 aa).

The interval 16-40 is non-specific ssDNA binding; sequence DPDGKKFDRVSRYFCDAESFKMELI.

This sequence belongs to the eukaryotic RPB8 RNA polymerase subunit family. As to quaternary structure, component of the RNA polymerase I (Pol I), RNA polymerase II (Pol II) and RNA polymerase III (Pol III) complexes consisting of at least 13, 12 and 17 subunits, respectively. Directly interacts with POLR2A.

The protein localises to the nucleus. Functionally, DNA-dependent RNA polymerase catalyzes the transcription of DNA into RNA using the four ribonucleoside triphosphates as substrates. Common component of RNA polymerases I, II and III which synthesize ribosomal RNA precursors, mRNA precursors and many functional non-coding RNAs, and small RNAs, such as 5S rRNA and tRNAs, respectively. This Caenorhabditis elegans protein is Probable DNA-directed RNA polymerases I, II, and III subunit RPABC3 (rpb-8).